The primary structure comprises 143 residues: Competence protein ComGD (143 aa).

Residues 1–10 (MNIKLNEEKG) constitute a propeptide that is removed on maturation. An N-methylphenylalanine modification is found at Phe11. Residues 11 to 31 (FTLLESLLVLSLASILLVAVF) form a helical membrane-spanning segment.

The transformation pili are flexible filaments, consisting mainly of the major pilin ComGC and smaller amounts of the minor pilins, including at least ComGD, ComGF and ComGG. Interacts with ComGF. Interacts with ComGG. Processing of ComGD in competent cells requires ComC.

It localises to the cell membrane. Its subcellular location is the cell surface. In terms of biological role, required for formation of the type IV-like pilus (T4P) that plays a role in transformation. Transformation pili are dynamically extended and retracted, perhaps thereby promoting DNA uptake and transformation. Required for transformation and DNA binding. The sequence is that of Competence protein ComGD (comGD) from Bacillus subtilis (strain 168).